The sequence spans 1311 residues: Kinase and exchange factor for Rac A (1311 aa).

In terms of domain architecture, Protein kinase spans 18-316; that stretch reads LVFKDIIGKG…STIVTILESI (299 aa). Residues 24–32 and Lys45 contribute to the ATP site; that span reads IGKGNFGCV. The active-site Proton acceptor is the Asp138. Disordered stretches follow at residues 169-201, 360-426, and 446-471; these read NGSD…KNNG, QQQS…TTTT, and PLSK…LIGS. Positions 451 to 471 are enriched in low complexity; that stretch reads QQQQQRNQNSSIIDNNSLIGS. An IQ domain is found at 650 to 679; that stretch reads ELNLIIKLQSRIRGWLVRRRYKIFLSNWKL. A DH domain is found at 691–927; it reads QWIRLFNQLI…RETSNYIQSQ (237 aa). Composition is skewed to low complexity over residues 994–1021 and 1031–1044; these read SKYN…TNSN and STSN…GNNN. 3 disordered regions span residues 994–1044, 1114–1145, and 1208–1311; these read SKYN…GNNN, NNPN…NGSI, and GTST…FSKD. Residues 1117-1137 show a composition bias toward gly residues; sequence NGGGSNNNSIGGGGGGRGGSG. The span at 1208-1229 shows a compositional bias: polar residues; sequence GTSTPERKTSLVNMSPSTTSSL. Positions 1230 to 1245 are enriched in low complexity; sequence NNIDSNYNNNNNNVTN. A compositionally biased stretch (polar residues) spans 1246 to 1257; it reads TPIKSVTSSPSI. Over residues 1263–1276 the composition is skewed to low complexity; sequence NDNNQQPQLPSQPN. Polar residues predominate over residues 1277–1287; sequence EEFQFTVPTTP. Over residues 1290 to 1303 the composition is skewed to basic residues; it reads KKKKRGSFSSKLKR.

It belongs to the protein kinase superfamily. TKL Ser/Thr protein kinase family. It depends on Mg(2+) as a cofactor.

The enzyme catalyses L-seryl-[protein] + ATP = O-phospho-L-seryl-[protein] + ADP + H(+). The catalysed reaction is L-threonyl-[protein] + ATP = O-phospho-L-threonyl-[protein] + ADP + H(+). This Dictyostelium discoideum (Social amoeba) protein is Kinase and exchange factor for Rac A (kxcA).